The chain runs to 240 residues: UDP-2,3-diacylglucosamine hydrolase (240 aa).

The Mn(2+) site is built by Asp8, His10, Asp41, Asn79, and His114. 79 to 80 provides a ligand contact to substrate; sequence NR. Substrate-binding residues include Asp122, Ser160, Asn164, Lys167, and His195. Residues His195 and His197 each contribute to the Mn(2+) site.

It belongs to the LpxH family. It depends on Mn(2+) as a cofactor.

It is found in the cell inner membrane. The enzyme catalyses UDP-2-N,3-O-bis[(3R)-3-hydroxytetradecanoyl]-alpha-D-glucosamine + H2O = 2-N,3-O-bis[(3R)-3-hydroxytetradecanoyl]-alpha-D-glucosaminyl 1-phosphate + UMP + 2 H(+). The protein operates within glycolipid biosynthesis; lipid IV(A) biosynthesis; lipid IV(A) from (3R)-3-hydroxytetradecanoyl-[acyl-carrier-protein] and UDP-N-acetyl-alpha-D-glucosamine: step 4/6. Functionally, hydrolyzes the pyrophosphate bond of UDP-2,3-diacylglucosamine to yield 2,3-diacylglucosamine 1-phosphate (lipid X) and UMP by catalyzing the attack of water at the alpha-P atom. Involved in the biosynthesis of lipid A, a phosphorylated glycolipid that anchors the lipopolysaccharide to the outer membrane of the cell. The protein is UDP-2,3-diacylglucosamine hydrolase of Salmonella agona (strain SL483).